Here is a 447-residue protein sequence, read N- to C-terminus: Keratin, type I cytoskeletal 15 (447 aa).

A head region spans residues 1–93; the sequence is MATTFLQTSS…GGDGGLLSGN (93 aa). Serine 16, serine 28, serine 33, and serine 47 each carry phosphoserine. A coil 1A region spans residues 94 to 129; the sequence is EKVTMQNLNDRLASYLDKVRALEEANTELEVKIRDW. An IF rod domain is found at 94–406; it reads EKVTMQNLND…NLLEGQDAKM (313 aa). Threonine 120 is modified (phosphothreonine). The tract at residues 130–148 is linker 1; it reads YQKQSPASPDRDYSHYFKT. Residues 149 to 240 form a coil 1B region; the sequence is MEEIRDKILA…KNHEEEMKEF (92 aa). The linker 12 stretch occupies residues 241 to 260; sequence SSQLAGQVNVEMDAAPGVDL. The interval 261 to 402 is coil 2; the sequence is TRMLAEMREQ…STYRNLLEGQ (142 aa). Lysine 289 participates in a covalent cross-link: Glycyl lysine isopeptide (Lys-Gly) (interchain with G-Cter in SUMO2). 2 positions are modified to phosphothreonine: threonine 290 and threonine 312. Residues 403–447 form a tail region; sequence DAKMAAIGVREASLRGGSSGGGSNFHISVEESVDGKVVSSRKRES. A Glycyl lysine isopeptide (Lys-Gly) (interchain with G-Cter in SUMO1); alternate cross-link involves residue lysine 438. Lysine 438 is covalently cross-linked (Glycyl lysine isopeptide (Lys-Gly) (interchain with G-Cter in SUMO2); alternate).

This sequence belongs to the intermediate filament family. Heterotetramer of two type I and two type II keratins. Forms a heterodimer with KRT14. Interacts with NOD2.

The polypeptide is Keratin, type I cytoskeletal 15 (Rattus norvegicus (Rat)).